The chain runs to 360 residues: DNA replication and repair protein RecF (360 aa).

30-37 (GHNGSGKT) lines the ATP pocket.

This sequence belongs to the RecF family.

Its subcellular location is the cytoplasm. Functionally, the RecF protein is involved in DNA metabolism; it is required for DNA replication and normal SOS inducibility. RecF binds preferentially to single-stranded, linear DNA. It also seems to bind ATP. This chain is DNA replication and repair protein RecF, found in Shewanella pealeana (strain ATCC 700345 / ANG-SQ1).